Here is a 132-residue protein sequence, read N- to C-terminus: D-ribose pyranase (132 aa).

The active-site Proton donor is the His20. Substrate-binding positions include Asp28, His99, and 121–123 (YSN).

The protein belongs to the RbsD / FucU family. RbsD subfamily. As to quaternary structure, homodecamer.

It is found in the cytoplasm. The catalysed reaction is beta-D-ribopyranose = beta-D-ribofuranose. It functions in the pathway carbohydrate metabolism; D-ribose degradation; D-ribose 5-phosphate from beta-D-ribopyranose: step 1/2. Catalyzes the interconversion of beta-pyran and beta-furan forms of D-ribose. The sequence is that of D-ribose pyranase from Pseudomonas putida (strain W619).